A 560-amino-acid chain; its full sequence is Putative ABC transporter ATP-binding protein SP_0483 (560 aa).

ABC transporter domains are found at residues 6–247 and 297–528; these read IEWK…GIRE and FRLE…ANLK. Residues 40 to 47 and 329 to 336 contribute to the ATP site; these read GPSGSGKS and GKNGAGKS.

Belongs to the ABC transporter superfamily.

It localises to the cell membrane. In terms of biological role, probably part of an ABC transporter complex. Responsible for energy coupling to the transport system. The sequence is that of Putative ABC transporter ATP-binding protein SP_0483 from Streptococcus pneumoniae serotype 4 (strain ATCC BAA-334 / TIGR4).